A 706-amino-acid chain; its full sequence is Elongation factor G (706 aa).

The region spanning 15–291 is the tr-type G domain; the sequence is LKTRNIGISA…GVLDYLASPV (277 aa). GTP-binding positions include 24–31, 91–95, and 145–148; these read AHIDSGKT, DTPGH, and NKLD.

It belongs to the TRAFAC class translation factor GTPase superfamily. Classic translation factor GTPase family. EF-G/EF-2 subfamily.

It is found in the cytoplasm. Its function is as follows. Catalyzes the GTP-dependent ribosomal translocation step during translation elongation. During this step, the ribosome changes from the pre-translocational (PRE) to the post-translocational (POST) state as the newly formed A-site-bound peptidyl-tRNA and P-site-bound deacylated tRNA move to the P and E sites, respectively. Catalyzes the coordinated movement of the two tRNA molecules, the mRNA and conformational changes in the ribosome. In Leptospira interrogans serogroup Icterohaemorrhagiae serovar copenhageni (strain Fiocruz L1-130), this protein is Elongation factor G.